We begin with the raw amino-acid sequence, 558 residues long: Urocanate hydratase (558 aa).

NAD(+) contacts are provided by residues 54-55 (GG), Gln-132, 178-180 (GMG), Glu-198, 244-245 (NA), 265-269 (QTSAH), 275-276 (YL), and Tyr-324. Cys-412 is a catalytic residue. NAD(+) is bound at residue Gly-494.

Belongs to the urocanase family. NAD(+) is required as a cofactor.

Its subcellular location is the cytoplasm. It carries out the reaction 4-imidazolone-5-propanoate = trans-urocanate + H2O. It functions in the pathway amino-acid degradation; L-histidine degradation into L-glutamate; N-formimidoyl-L-glutamate from L-histidine: step 2/3. Functionally, catalyzes the conversion of urocanate to 4-imidazolone-5-propionate. This chain is Urocanate hydratase, found in Acinetobacter baumannii (strain ACICU).